The sequence spans 431 residues: Adenylosuccinate synthetase (431 aa).

Residues 21-27 (GDEGKGK) and 49-51 (GHT) contribute to the GTP site. Aspartate 22 (proton acceptor) is an active-site residue. The Mg(2+) site is built by aspartate 22 and glycine 49. IMP is bound by residues 22-25 (DEGK), 47-50 (NAGH), threonine 138, arginine 152, asparagine 230, threonine 245, and arginine 309. Catalysis depends on histidine 50, which acts as the Proton donor. A substrate-binding site is contributed by 305 to 311 (ATTGRPR). GTP contacts are provided by residues arginine 311, 337 to 339 (KLD), and 419 to 421 (GNG).

This sequence belongs to the adenylosuccinate synthetase family. As to quaternary structure, homodimer. The cofactor is Mg(2+).

The protein resides in the cytoplasm. The enzyme catalyses IMP + L-aspartate + GTP = N(6)-(1,2-dicarboxyethyl)-AMP + GDP + phosphate + 2 H(+). It participates in purine metabolism; AMP biosynthesis via de novo pathway; AMP from IMP: step 1/2. Functionally, plays an important role in the de novo pathway and in the salvage pathway of purine nucleotide biosynthesis. Catalyzes the first committed step in the biosynthesis of AMP from IMP. In Paramecium tetraurelia, this protein is Adenylosuccinate synthetase.